The chain runs to 312 residues: MKHLIGLQGMAAESIKEILDRAALHKHLFINQENAIRPSLKGKRIALAFFENSTRTRFSFEIAARNLGAQTLNFSASSSSLSKGESMIDTIRNLEAMRVDAFIIRHPSSGSAEMIGKSTDKHVINAGDGSREHPTQALLDIFTLREYFGSLEGIKVMILGDILHSRVARSNIFGLTTLGAEVAVCGPATLLPVDTSRLGIRIFSQLDEALGWADAAIVLRLQLERATGGYLPSLQDYSFTFGLTDERLEKIKKHLPVLHPGPINREIEISGNVADRIQPPGFSQSMLLEQVTNGVAVRTAVLELLISPQPDT.

Residues Arg-55 and Thr-56 each contribute to the carbamoyl phosphate site. Lys-83 provides a ligand contact to L-aspartate. Residues Arg-105, His-133, and Gln-136 each coordinate carbamoyl phosphate. Residues Arg-166 and Arg-220 each contribute to the L-aspartate site. Positions 261 and 262 each coordinate carbamoyl phosphate.

This sequence belongs to the aspartate/ornithine carbamoyltransferase superfamily. ATCase family. Heterododecamer (2C3:3R2) of six catalytic PyrB chains organized as two trimers (C3), and six regulatory PyrI chains organized as three dimers (R2).

It catalyses the reaction carbamoyl phosphate + L-aspartate = N-carbamoyl-L-aspartate + phosphate + H(+). Its pathway is pyrimidine metabolism; UMP biosynthesis via de novo pathway; (S)-dihydroorotate from bicarbonate: step 2/3. Functionally, catalyzes the condensation of carbamoyl phosphate and aspartate to form carbamoyl aspartate and inorganic phosphate, the committed step in the de novo pyrimidine nucleotide biosynthesis pathway. This Prosthecochloris aestuarii (strain DSM 271 / SK 413) protein is Aspartate carbamoyltransferase catalytic subunit.